A 23-amino-acid polypeptide reads, in one-letter code: Paralytic peptide 1 (23 aa).

A disulfide bridge connects residues Cys-7 and Cys-19.

The protein belongs to the GBP/PSP1/paralytic peptide family. In terms of tissue distribution, hemolymph.

In terms of biological role, causes rapid, rigid paralysis when injected into Lepidopteran larvae. The physiological role may be to reduce hemolymph loss following injury and promote wound healing. The chain is Paralytic peptide 1 from Spodoptera exigua (Beet armyworm).